Reading from the N-terminus, the 248-residue chain is Phosphoribosylformylglycinamidine synthase subunit PurQ (248 aa).

Positions 6–248 (AMVLRMEGTN…IFFRILYNST (243 aa)) constitute a Glutamine amidotransferase type-1 domain. Cys95 (nucleophile) is an active-site residue. Active-site residues include His215 and Glu217.

As to quaternary structure, part of the FGAM synthase complex composed of 1 PurL, 1 PurQ and 2 PurS subunits.

It localises to the cytoplasm. It catalyses the reaction N(2)-formyl-N(1)-(5-phospho-beta-D-ribosyl)glycinamide + L-glutamine + ATP + H2O = 2-formamido-N(1)-(5-O-phospho-beta-D-ribosyl)acetamidine + L-glutamate + ADP + phosphate + H(+). The catalysed reaction is L-glutamine + H2O = L-glutamate + NH4(+). It participates in purine metabolism; IMP biosynthesis via de novo pathway; 5-amino-1-(5-phospho-D-ribosyl)imidazole from N(2)-formyl-N(1)-(5-phospho-D-ribosyl)glycinamide: step 1/2. In terms of biological role, part of the phosphoribosylformylglycinamidine synthase complex involved in the purines biosynthetic pathway. Catalyzes the ATP-dependent conversion of formylglycinamide ribonucleotide (FGAR) and glutamine to yield formylglycinamidine ribonucleotide (FGAM) and glutamate. The FGAM synthase complex is composed of three subunits. PurQ produces an ammonia molecule by converting glutamine to glutamate. PurL transfers the ammonia molecule to FGAR to form FGAM in an ATP-dependent manner. PurS interacts with PurQ and PurL and is thought to assist in the transfer of the ammonia molecule from PurQ to PurL. The chain is Phosphoribosylformylglycinamidine synthase subunit PurQ from Picrophilus torridus (strain ATCC 700027 / DSM 9790 / JCM 10055 / NBRC 100828 / KAW 2/3).